The following is a 154-amino-acid chain: D-ribose pyranase 2 (154 aa).

His20 functions as the Proton donor in the catalytic mechanism. Substrate-binding positions include Asp28, His98, and 121–123 (WGN).

The protein belongs to the RbsD / FucU family. RbsD subfamily. In terms of assembly, homodecamer.

Its subcellular location is the cytoplasm. It catalyses the reaction beta-D-ribopyranose = beta-D-ribofuranose. It functions in the pathway carbohydrate metabolism; D-ribose degradation; D-ribose 5-phosphate from beta-D-ribopyranose: step 1/2. In terms of biological role, catalyzes the interconversion of beta-pyran and beta-furan forms of D-ribose. The sequence is that of D-ribose pyranase 2 from Rubrobacter xylanophilus (strain DSM 9941 / JCM 11954 / NBRC 16129 / PRD-1).